The following is a 654-amino-acid chain: Pentatricopeptide repeat-containing protein At3g16610 (654 aa).

17 PPR repeats span residues 1–32 (MFLSLLETCIRSRNLVLGQVIHQHLLKRSLTL), 34–64 (SSTVLVNLTRLYASCNEVELARHVFDEIPHP), 67–101 (NPIAWDLMIRAYASNDFAEKALDLYYKMLNSGVRP), 102–136 (TKYTYPFVLKACAGLRAIDDGKLIHSHVNCSDFAT), 137–171 (DMYVCTALVDFYAKCGELEMAIKVFDEMPKRDMVA), 172–203 (WNAMISGFSLHCCLTDVIGLFLDMRRIDGLSP), 204–238 (NLSTIVGMFPALGRAGALREGKAVHGYCTRMGFSN), 239–269 (DLVVKTGILDVYAKSKCIIYARRVFDLDFKK), 270–304 (NEVTWSAMIGGYVENEMIKEAGEVFFQMLVNDNVA), 307–341 (TPVAIGLILMGCARFGDLSGGRCVHCYAVKAGFIL), 342–372 (DLTVQNTIISFYAKYGSLCDAFRQFSEIGLK), 373–407 (DVISYNSLITGCVVNCRPEESFRLFHEMRTSGIRP), 408–442 (DITTLLGVLTACSHLAALGHGSSCHGYCVVHGYAV), 443–473 (NTSICNALMDMYTKCGKLDVAKRVFDTMHKR), 474–508 (DIVSWNTMLFGFGIHGLGKEALSLFNSMQETGVNP), 509–543 (DEVTLLAILSACSHSGLVDEGKQLFNSMSRGDFNV), and 546–576 (RIDHYNCMTDLLARAGYLDEAYDFVNKMPFE). The segment at 581 to 654 (VLGTLLSACW…KTPGYSWVDV (74 aa)) is type E motif; degenerate.

It belongs to the PPR family. PCMP-E subfamily.

This is Pentatricopeptide repeat-containing protein At3g16610 (PCMP-E91) from Arabidopsis thaliana (Mouse-ear cress).